Consider the following 120-residue polypeptide: ATP-dependent Clp protease adapter protein ClpS (120 aa).

It belongs to the ClpS family. As to quaternary structure, binds to the N-terminal domain of the chaperone ClpA.

Functionally, involved in the modulation of the specificity of the ClpAP-mediated ATP-dependent protein degradation. The sequence is that of ATP-dependent Clp protease adapter protein ClpS from Pseudomonas fluorescens (strain ATCC BAA-477 / NRRL B-23932 / Pf-5).